A 222-amino-acid polypeptide reads, in one-letter code: Small ribosomal subunit protein uS3 (222 aa).

The region spanning 39-107 (IRKYIKTKFY…QININIAEIK (69 aa)) is the KH type-2 domain.

It belongs to the universal ribosomal protein uS3 family. As to quaternary structure, part of the 30S ribosomal subunit. Forms a tight complex with proteins S10 and S14.

Its function is as follows. Binds the lower part of the 30S subunit head. Binds mRNA in the 70S ribosome, positioning it for translation. The polypeptide is Small ribosomal subunit protein uS3 (Carboxydothermus hydrogenoformans (strain ATCC BAA-161 / DSM 6008 / Z-2901)).